The primary structure comprises 483 residues: Glutamyl-tRNA(Gln) amidotransferase subunit A (483 aa).

Active-site charge relay system residues include K77 and S152. The active-site Acyl-ester intermediate is the S176.

This sequence belongs to the amidase family. GatA subfamily. Heterotrimer of A, B and C subunits.

The catalysed reaction is L-glutamyl-tRNA(Gln) + L-glutamine + ATP + H2O = L-glutaminyl-tRNA(Gln) + L-glutamate + ADP + phosphate + H(+). Its function is as follows. Allows the formation of correctly charged Gln-tRNA(Gln) through the transamidation of misacylated Glu-tRNA(Gln) in organisms which lack glutaminyl-tRNA synthetase. The reaction takes place in the presence of glutamine and ATP through an activated gamma-phospho-Glu-tRNA(Gln). In Listeria monocytogenes serotype 4a (strain HCC23), this protein is Glutamyl-tRNA(Gln) amidotransferase subunit A.